A 433-amino-acid chain; its full sequence is Mblk-1-related factor 1 (433 aa).

Residues 145 to 197 (NKSNILRRNYTVEDLTQAVEDIRQGKLGTRRASVVYGIPRSTLRNKIYKLEAE) enclose the HTH psq-type 1 domain. A DNA-binding region (H-T-H motif) is located at residues 173-193 (TRRASVVYGIPRSTLRNKIYK). Residues 235 to 254 (GNQSDSSSSSPHASMCPSSP) are compositionally biased toward low complexity. Disordered regions lie at residues 235–278 (GNQS…SCSP) and 304–338 (ANIS…PKRG). The span at 304-319 (ANISNVDTHTPTPISE) shows a compositional bias: polar residues. The segment covering 320-332 (KSQKMHGNEEWKR) has biased composition (basic and acidic residues). An HTH psq-type 2 domain is found at 334 to 386 (RPKRGQYRKYDKNALDEAVRSVRRGEMTVHRAGSFFGVPHSTLEYKVKERNLM). The segment at residues 362 to 382 (VHRAGSFFGVPHSTLEYKVKE) is a DNA-binding region (H-T-H motif). A disordered region spans residues 393–433 (LYSHDSSTSEDGSQLVTSTISEKSDSSSHTSTPIPFPISLV). Polar residues predominate over residues 396 to 408 (HDSSTSEDGSQLV). Residues 409 to 424 (TSTISEKSDSSSHTST) are compositionally biased toward low complexity.

In terms of tissue distribution, expressed in AIM, RIC, AIZ, ADF, ADL, ASK, AWA, AUA, AIN, RIH (or RIR) and RIF head neurons and, in PVP, PVQ and DVA (or DVC) tail neurons, some intestinal cells, somatic gonad and vulva.

Its subcellular location is the nucleus. Its function is as follows. May act as transcription activator. Plays a role in neurogenesis by regulating neurite pruning between left and right AIM neurons and left and right RIF neurons during larval development. Regulates olfactory plasticity. The sequence is that of Mblk-1-related factor 1 from Caenorhabditis elegans.